The following is a 65-amino-acid chain: Putative antitoxin VapB7 (65 aa).

Belongs to the UPF0165 family.

Functionally, possibly the antitoxin component of a type II toxin-antitoxin (TA) system. Its cognate toxin is VapC7 (Potential). The sequence is that of Putative antitoxin VapB7 (vapB7) from Archaeoglobus fulgidus (strain ATCC 49558 / DSM 4304 / JCM 9628 / NBRC 100126 / VC-16).